A 311-amino-acid chain; its full sequence is Histidine decarboxylase proenzyme (311 aa).

Residues D64 and S82 each coordinate substrate. S83 bears the Pyruvic acid (Ser) mark. E198 (proton donor) is an active-site residue.

The proenzyme is a hexamer of identical pi chains; each pi chain monomer is cleaved to form a small (or beta) chain and a large (or alpha) chain by non-hydrolytic self-catalysis. Requires pyruvate as cofactor.

It carries out the reaction L-histidine + H(+) = histamine + CO2. In Lactobacillus sp. (strain 30a), this protein is Histidine decarboxylase proenzyme (hdcA).